Consider the following 503-residue polypeptide: NAD(P)H-quinone oxidoreductase chain 4, chloroplastic (503 aa).

Helical transmembrane passes span phenylalanine 4 to leucine 24, isoleucine 37 to leucine 57, isoleucine 87 to valine 107, leucine 134 to methionine 154, phenylalanine 167 to leucine 187, alanine 208 to isoleucine 228, histidine 242 to valine 262, alanine 272 to alanine 292, isoleucine 305 to aspartate 325, glycine 330 to glycine 350, leucine 386 to threonine 406, isoleucine 416 to methionine 436, and leucine 462 to valine 482.

Belongs to the complex I subunit 4 family.

It localises to the plastid. Its subcellular location is the chloroplast thylakoid membrane. It carries out the reaction a plastoquinone + NADH + (n+1) H(+)(in) = a plastoquinol + NAD(+) + n H(+)(out). It catalyses the reaction a plastoquinone + NADPH + (n+1) H(+)(in) = a plastoquinol + NADP(+) + n H(+)(out). The sequence is that of NAD(P)H-quinone oxidoreductase chain 4, chloroplastic from Drimys granadensis.